The sequence spans 398 residues: Acetate kinase (398 aa).

Residue N9 coordinates Mg(2+). K16 lines the ATP pocket. R89 contributes to the substrate binding site. The active-site Proton donor/acceptor is D146. ATP-binding positions include 206 to 210 (HLGNG), 281 to 283 (DCR), and 329 to 333 (GIGEN). Mg(2+) is bound at residue E384.

This sequence belongs to the acetokinase family. As to quaternary structure, homodimer. Mg(2+) serves as cofactor. It depends on Mn(2+) as a cofactor.

Its subcellular location is the cytoplasm. The catalysed reaction is acetate + ATP = acetyl phosphate + ADP. Its pathway is metabolic intermediate biosynthesis; acetyl-CoA biosynthesis; acetyl-CoA from acetate: step 1/2. In terms of biological role, catalyzes the formation of acetyl phosphate from acetate and ATP. Can also catalyze the reverse reaction. This Vibrio campbellii (strain ATCC BAA-1116) protein is Acetate kinase.